The primary structure comprises 641 residues: Chaperone protein DnaK (641 aa).

Threonine 199 is modified (phosphothreonine; by autocatalysis). Over residues 577-590 the composition is skewed to basic and acidic residues; the sequence is KGDNKDEIETRTQK. The segment at 577–641 is disordered; that stretch reads KGDNKDEIET…EFEEVDDKKK (65 aa). Residues 617-626 show a composition bias toward low complexity; it reads GAEQASAQQD. Positions 627-641 are enriched in acidic residues; sequence DVVDAEFEEVDDKKK.

Belongs to the heat shock protein 70 family.

Acts as a chaperone. This chain is Chaperone protein DnaK, found in Thioalkalivibrio sulfidiphilus (strain HL-EbGR7).